We begin with the raw amino-acid sequence, 123 residues long: Defensin beta 118 (123 aa).

Positions 1 to 19 (MKLLLLALPVLVLLPQVIP) are cleaved as a signal peptide. Disulfide bonds link Cys-27–Cys-54, Cys-34–Cys-48, and Cys-38–Cys-55. The propeptide occupies 65 to 123 (VPMTSPTPLSDSTPGIIDDILTVRFTTDYFEVSSKKDMVEESEAGRGTETSLPNVHHSS). The segment covering 100–110 (KDMVEESEAGR) has biased composition (basic and acidic residues). The segment at 100-123 (KDMVEESEAGRGTETSLPNVHHSS) is disordered. Over residues 112–123 (TETSLPNVHHSS) the composition is skewed to polar residues.

The protein belongs to the beta-defensin family. In terms of processing, the three-dimensional structure formed by the three intramolecular disulfide bridges is indispensable for antimicrobial activity.

The protein localises to the secreted. Functionally, host defense peptide that exhibits antimicrobial activity against both Gram-negative bacteria, such as E.coli and S.typhimurium, and Gram-positive bacteria, such as S.aureus and B.subtilis. Inhibits cell adhesion of E.coli on intestinal epithelial enterocytes. Causes rapid permeabilization of both the outer and inner membrane of E.coli, leading to morphological alterations on the bacterial surface. Binds to bacterial lipopolysaccharides (LPS) with high affinity, and may thereby be involved in immunoregulation through LPS neutralization. May contribute to epididymal innate immunity and protect the sperm against attack by microorganisms. The polypeptide is Defensin beta 118 (DEFB118) (Pan troglodytes (Chimpanzee)).